We begin with the raw amino-acid sequence, 432 residues long: Trigger factor (432 aa).

The PPIase FKBP-type domain maps to 161-246; that stretch reads EDRVTIDFTG…LKKVEERELP (86 aa).

Belongs to the FKBP-type PPIase family. Tig subfamily.

The protein localises to the cytoplasm. The catalysed reaction is [protein]-peptidylproline (omega=180) = [protein]-peptidylproline (omega=0). Its function is as follows. Involved in protein export. Acts as a chaperone by maintaining the newly synthesized protein in an open conformation. Functions as a peptidyl-prolyl cis-trans isomerase. The protein is Trigger factor of Cronobacter sakazakii (strain ATCC BAA-894) (Enterobacter sakazakii).